The sequence spans 362 residues: Serine/threonine-protein kinase SBK2 (362 aa).

Residues 1–11 (MPGKQSEDRPM) are compositionally biased toward basic and acidic residues. Positions 1 to 20 (MPGKQSEDRPMEVAAVEDGG) are disordered. The Protein kinase domain occupies 62–330 (YEEVRPLGQG…IKSYLGQPWK (269 aa)). Residues 68–76 (LGQGRFGRV) and lysine 91 each bind ATP. The active-site Proton acceptor is aspartate 183. The interval 317–362 (PVSSIKSYLGQPWKQREEGAEELTKELREDGSRGGQEAAKGEQPAC) is disordered. Over residues 330 to 348 (KQREEGAEELTKELREDGS) the composition is skewed to basic and acidic residues.

This sequence belongs to the protein kinase superfamily. Ser/Thr protein kinase family. STKL subfamily.

The enzyme catalyses L-seryl-[protein] + ATP = O-phospho-L-seryl-[protein] + ADP + H(+). The catalysed reaction is L-threonyl-[protein] + ATP = O-phospho-L-threonyl-[protein] + ADP + H(+). The polypeptide is Serine/threonine-protein kinase SBK2 (Sbk2) (Rattus norvegicus (Rat)).